We begin with the raw amino-acid sequence, 401 residues long: Argininosuccinate synthase (401 aa).

8–16 contacts ATP; that stretch reads AYSGGLDTS. Y86 contributes to the L-citrulline binding site. An ATP-binding site is contributed by G116. 3 residues coordinate L-aspartate: T118, N122, and D123. N122 contacts L-citrulline. R126, S174, E258, and Y270 together coordinate L-citrulline.

This sequence belongs to the argininosuccinate synthase family. Type 1 subfamily. As to quaternary structure, homotetramer.

It is found in the cytoplasm. It carries out the reaction L-citrulline + L-aspartate + ATP = 2-(N(omega)-L-arginino)succinate + AMP + diphosphate + H(+). Its pathway is amino-acid biosynthesis; L-arginine biosynthesis; L-arginine from L-ornithine and carbamoyl phosphate: step 2/3. The chain is Argininosuccinate synthase from Acidothermus cellulolyticus (strain ATCC 43068 / DSM 8971 / 11B).